The sequence spans 199 residues: GTP-binding protein Di-Ras2 (199 aa).

Residues 14-21 (GAGGVGKS), 33-39 (RESYIPT), 61-65 (DTTGS), and 121-124 (NKCD) each bind GTP. Serine 35 is modified (phosphoserine). The Effector region signature appears at 36 to 44 (YIPTVEDTY). At serine 126 the chain carries Phosphoserine. Residue 152-153 (AK) participates in GTP binding. Position 196 is a cysteine methyl ester (cysteine 196). Cysteine 196 is lipidated: S-geranylgeranyl cysteine. Positions 197-199 (VIM) are cleaved as a propeptide — removed in mature form.

This sequence belongs to the small GTPase superfamily. Di-Ras family. In terms of processing, ubiquitinated by the ECS(ASB11) complex via 'Lys-11'-linked ubiquitin chains, leading to its degradation by the proteasome.

The protein resides in the cell membrane. It carries out the reaction GTP + H2O = GDP + phosphate + H(+). Functionally, displays low GTPase activity and exists predominantly in the GTP-bound form. This is GTP-binding protein Di-Ras2 (DIRAS2) from Pongo abelii (Sumatran orangutan).